Reading from the N-terminus, the 157-residue chain is 2-C-methyl-D-erythritol 2,4-cyclodiphosphate synthase (157 aa).

A divalent metal cation contacts are provided by aspartate 8 and histidine 10. 4-CDP-2-C-methyl-D-erythritol 2-phosphate-binding positions include 8–10 (DVH) and 34–35 (HS). Residue histidine 42 participates in a divalent metal cation binding. 4-CDP-2-C-methyl-D-erythritol 2-phosphate is bound by residues 56 to 58 (DIG), 61 to 65 (FPDTD), 100 to 106 (AQAPKMA), 132 to 135 (TTSE), phenylalanine 139, and arginine 142.

This sequence belongs to the IspF family. In terms of assembly, homotrimer. The cofactor is a divalent metal cation.

The catalysed reaction is 4-CDP-2-C-methyl-D-erythritol 2-phosphate = 2-C-methyl-D-erythritol 2,4-cyclic diphosphate + CMP. It functions in the pathway isoprenoid biosynthesis; isopentenyl diphosphate biosynthesis via DXP pathway; isopentenyl diphosphate from 1-deoxy-D-xylulose 5-phosphate: step 4/6. Functionally, involved in the biosynthesis of isopentenyl diphosphate (IPP) and dimethylallyl diphosphate (DMAPP), two major building blocks of isoprenoid compounds. Catalyzes the conversion of 4-diphosphocytidyl-2-C-methyl-D-erythritol 2-phosphate (CDP-ME2P) to 2-C-methyl-D-erythritol 2,4-cyclodiphosphate (ME-CPP) with a corresponding release of cytidine 5-monophosphate (CMP). In Photobacterium profundum (strain SS9), this protein is 2-C-methyl-D-erythritol 2,4-cyclodiphosphate synthase.